The sequence spans 351 residues: N-formyl peptide receptor 2 (351 aa).

Residues 1–27 are Extracellular-facing; sequence METNFSTPLNEYEEVSYESAGYTVLRI. Asn4 carries N-linked (GlcNAc...) asparagine glycosylation. Residues 28–50 traverse the membrane as a helical segment; it reads LPLVVLGVTFVLGVLGNGLVIWV. At 51–61 the chain is on the cytoplasmic side; sequence AGFRMTRTVTT. The helical transmembrane segment at 62 to 83 threads the bilayer; that stretch reads ICYLNLALADFSFTATLPFLIV. Topologically, residues 84–100 are extracellular; the sequence is SMAMGEKWPFGWFLCKL. A disulfide bridge connects residues Cys98 and Cys176. A helical transmembrane segment spans residues 101-121; sequence IHIVVDINLFGSVFLIGFIAL. Residues 122–140 lie on the Cytoplasmic side of the membrane; it reads DRCICVLHPVWAQNHRTVS. A helical transmembrane segment spans residues 141-162; sequence LAMKVIVGPWILALVLTLPVFL. The Extracellular segment spans residues 163-205; that stretch reads FLTTVTIPNGDTYCTFNFASWGGTPEERLKVAITMLTARGIIR. A helical membrane pass occupies residues 206 to 226; that stretch reads FVIGFSLPMSIVAICYGLIAA. Residues 227 to 242 lie on the Cytoplasmic side of the membrane; that stretch reads KIHKKGMIKSSRPLRV. The helical transmembrane segment at 243–266 threads the bilayer; the sequence is LTAVVASFFICWFPFQLVALLGTV. The Extracellular segment spans residues 267-286; sequence WLKEMLFYGKYKIIDILVNP. Residues 287–306 form a helical membrane-spanning segment; that stretch reads TSSLAFFNSCLNPMLYVFVG. Topologically, residues 307–351 are cytoplasmic; it reads QDFRERLIHSLPTSLERALSEDSAPTNDTAANSASPPAETELQAM. The interval 325 to 351 is disordered; the sequence is LSEDSAPTNDTAANSASPPAETELQAM. Positions 329-341 are enriched in polar residues; that stretch reads SAPTNDTAANSAS.

Belongs to the G-protein coupled receptor 1 family. Interacts with Amyloid-beta protein 42, product of APP; the interaction takes place at the cell surface and the complex is then rapidly internalized. In terms of assembly, (Microbial infection) Interacts with Staphylococcus aureus protein SSL13; this interaction leads to the activation of neutrophils. Detected in lung, bone marrow, neutrophils, spleen and testis.

Its subcellular location is the cell membrane. Low affinity receptor for N-formyl-methionyl peptides, which are powerful neutrophil chemotactic factors. Binding of FMLP to the receptor causes activation of neutrophils. This response is mediated via a G-protein that activates a phosphatidylinositol-calcium second messenger system. The activation of LXA4R could result in an anti-inflammatory outcome counteracting the actions of pro-inflammatory signals such as LTB4 (leukotriene B4). Receptor for the chemokine-like protein FAM19A5, mediating FAM19A5-stimulated macrophage chemotaxis and the inhibitory effect on TNFSF11/RANKL-induced osteoclast differentiation. Acts as a receptor for humanin. The protein is N-formyl peptide receptor 2 (FPR2) of Homo sapiens (Human).